Reading from the N-terminus, the 415-residue chain is Squalene synthase 3 (415 aa).

Helical transmembrane passes span 281-301 and 392-412; these read AIFRFCAIPQIMAIGTLALCY and LIIILFIILAILYAYLSSNLP.

The protein belongs to the phytoene/squalene synthase family. Requires Mg(2+) as cofactor. It depends on Mn(2+) as a cofactor.

The protein localises to the endoplasmic reticulum membrane. It carries out the reaction 2 (2E,6E)-farnesyl diphosphate + NADH + H(+) = squalene + 2 diphosphate + NAD(+). It catalyses the reaction 2 (2E,6E)-farnesyl diphosphate + NADPH + H(+) = squalene + 2 diphosphate + NADP(+). The protein operates within terpene metabolism; lanosterol biosynthesis; lanosterol from farnesyl diphosphate: step 1/3. Its function is as follows. Component of the triterpene saponins (e.g. ginsenosides or panaxosides) and phytosterols biosynthetic pathways. Catalyzes the biosynthesis of squalene. The polypeptide is Squalene synthase 3 (Panax ginseng (Korean ginseng)).